A 217-amino-acid chain; its full sequence is GTP-binding protein Rit2 (217 aa).

GTP is bound by residues 27-34 (GAGGVGKS), 74-78 (DTAGQ), and 133-136 (NKID).

The protein belongs to the small GTPase superfamily. Ras family. Interacts with PLXNB3. Interacts with AFDN, the C-terminal domain of RALGDS and RLF, but not with RIN1 and PIK3CA. RLF binds exclusively to the active GTP-bound form. Binds calmodulin. Interacts with POU4F1 (via N-terminus); the interaction controls POU4F1 transactivation activity on some neuronal target genes. In terms of tissue distribution, expressed in ganglion cell layer (GCL), inner plexiform layer (IPL) and inner nuclear layer (INL) of the retina. Expressed in retinal ganglion cells (RGCs). Expressed in horizontal, bipolar and amacrine cells, but not Mueller glia, of the INL (at protein level). Neuron-specific. Expressed in ganglion cell layer (GCL) and inner plexiform layer (IPL).

The protein resides in the nucleus. It is found in the cell membrane. The enzyme catalyses GTP + H2O = GDP + phosphate + H(+). With respect to regulation, alternates between an inactive form bound to GDP and an active form bound to GTP. Functionally, binds and exchanges GTP and GDP. Binds and modulates the activation of POU4F1 as gene expression regulator. The sequence is that of GTP-binding protein Rit2 (Rit2) from Mus musculus (Mouse).